Here is a 336-residue protein sequence, read N- to C-terminus: tRNA N6-adenosine threonylcarbamoyltransferase (336 aa).

Fe cation-binding residues include H111 and H115. Residues 133–137, D166, G179, and N276 each bind substrate; that span reads LISGG. Residue D301 coordinates Fe cation.

Belongs to the KAE1 / TsaD family. The cofactor is Fe(2+).

The protein localises to the cytoplasm. It carries out the reaction L-threonylcarbamoyladenylate + adenosine(37) in tRNA = N(6)-L-threonylcarbamoyladenosine(37) in tRNA + AMP + H(+). Required for the formation of a threonylcarbamoyl group on adenosine at position 37 (t(6)A37) in tRNAs that read codons beginning with adenine. Is involved in the transfer of the threonylcarbamoyl moiety of threonylcarbamoyl-AMP (TC-AMP) to the N6 group of A37, together with TsaE and TsaB. TsaD likely plays a direct catalytic role in this reaction. The chain is tRNA N6-adenosine threonylcarbamoyltransferase from Wolbachia pipientis subsp. Culex pipiens (strain wPip).